A 679-amino-acid chain; its full sequence is MANSQRKILVTSALPYANGPIHLGHMLEYIQTDIWSRFQKLRGHECHYICADDAHGTPIMLKAQQMGIAPEEMIAQVQKEHEKDFADFNIQFDNFHSTHSDENRELASQVYIKLRDAGYIKTKTISQLFDPEKSMFLPDRFVKGTCPRCKSEDQYGDNCDNCGATYSTTDLIDPRSAVSGATPVMKDSEHFFFDLPAFEGMLKEWINSGSLQQEMANKLGEWFEQGLQQWDISRDAPYFGFEIPDAPGKFFYVWLDAPIGYMGSFKNLCNKRDDLNFDEFWSKDSTAEVYHFIGKDIVYFHSLFWPAMLEGAGLRKPTSVYAHGYVTVNGAKMSKSKGTFIKARTYLDNLDPEYLRYYYAAKLSSRIDDLDLNLEDFAQRVNSDLVGKLVNLASRTAGFISKRFGGKLAKIADTSLTTSFLAKQEIIANFYETREYGKAMREIMALADIANAYVADSAPWQLIKEEDKQEEAHQVCSNALNLFRILVTYLKPVLPKLAQDVEAFLQMELTWDNLDIDLAGHEIAKFKALMQRVEMKSIEAIIEASKENLQVTAEPEVKKEVKTPLEQDPILDEISFDDFAKIDLRIARIAKAEHVKEANKLLRLELDLGGETKQVFAGIKSAYAPEDLEGKLTVMVANLAPRQMRFGVSEGMVLAAGPGGKDLWIMEPHEGAQPGMKVK.

The short motif at 15–25 (PYANGPIHLGH) is the 'HIGH' region element. Residues Cys146, Cys149, Cys159, and Cys162 each coordinate Zn(2+). Positions 332 to 336 (KMSKS) match the 'KMSKS' region motif. Residue Lys335 coordinates ATP. One can recognise a tRNA-binding domain in the interval 578–679 (DFAKIDLRIA…EGAQPGMKVK (102 aa)).

The protein belongs to the class-I aminoacyl-tRNA synthetase family. MetG type 1 subfamily. As to quaternary structure, homodimer. Zn(2+) serves as cofactor.

The protein localises to the cytoplasm. The catalysed reaction is tRNA(Met) + L-methionine + ATP = L-methionyl-tRNA(Met) + AMP + diphosphate. Functionally, is required not only for elongation of protein synthesis but also for the initiation of all mRNA translation through initiator tRNA(fMet) aminoacylation. In Shewanella halifaxensis (strain HAW-EB4), this protein is Methionine--tRNA ligase.